We begin with the raw amino-acid sequence, 143 residues long: Holo-[acyl-carrier-protein] synthase (143 aa).

Residues aspartate 8 and glutamate 62 each coordinate Mg(2+).

Belongs to the P-Pant transferase superfamily. AcpS family. It depends on Mg(2+) as a cofactor.

It localises to the cytoplasm. The catalysed reaction is apo-[ACP] + CoA = holo-[ACP] + adenosine 3',5'-bisphosphate + H(+). Its function is as follows. Transfers the 4'-phosphopantetheine moiety from coenzyme A to a Ser of acyl-carrier-protein. The chain is Holo-[acyl-carrier-protein] synthase from Cupriavidus metallidurans (strain ATCC 43123 / DSM 2839 / NBRC 102507 / CH34) (Ralstonia metallidurans).